Consider the following 227-residue polypeptide: MRAVLLVSGGMDSLVATALAHREGLELAAMHVNYGQRTWQKELECFRQICVHYGIVDRLEVDAMFLSAIGGSSLTDATIPVGPADLAGTDIPTSYVPFRNANFLSMAVSWSEVIGANRIYIGAVEEDSSGYPDCRKVFYDAFNQVIEHGTRPETRIEIVTPLIAMSKAEIVRRGMELDAPFHFSWSCYKSEGKACGVCDSCARRLRAFASVGMDDPVEYEVRPNYLQ.

7–17 (VSGGMDSLVAT) is an ATP binding site. Zn(2+)-binding residues include Cys-187, Cys-195, Cys-198, and Cys-201.

This sequence belongs to the QueC family. Requires Zn(2+) as cofactor.

The catalysed reaction is 7-carboxy-7-deazaguanine + NH4(+) + ATP = 7-cyano-7-deazaguanine + ADP + phosphate + H2O + H(+). It participates in purine metabolism; 7-cyano-7-deazaguanine biosynthesis. Catalyzes the ATP-dependent conversion of 7-carboxy-7-deazaguanine (CDG) to 7-cyano-7-deazaguanine (preQ(0)). The polypeptide is 7-cyano-7-deazaguanine synthase (Chlorobaculum tepidum (strain ATCC 49652 / DSM 12025 / NBRC 103806 / TLS) (Chlorobium tepidum)).